Here is a 520-residue protein sequence, read N- to C-terminus: Glucose starvation modulator protein 1 (520 aa).

Residues 20–48 (CVFCHEKHLQCSNERPCKNCVKRGLAHEC) constitute a DNA-binding region (zn(2)-C6 fungal-type). The 70-residue stretch at 376-445 (DYEKLSQLNS…FRLFKTVAVG (70 aa)) folds into the PAS domain.

The protein belongs to the ERT1/acuK family.

It is found in the nucleus. Its function is as follows. Transcription factor which regulates nonfermentable carbon utilization. This is Glucose starvation modulator protein 1 (GSM1) from Scheffersomyces stipitis (strain ATCC 58785 / CBS 6054 / NBRC 10063 / NRRL Y-11545) (Yeast).